Here is a 121-residue protein sequence, read N- to C-terminus: Large ribosomal subunit protein eL34B (121 aa).

It belongs to the eukaryotic ribosomal protein eL34 family. In terms of assembly, component of the large ribosomal subunit (LSU). Mature yeast ribosomes consist of a small (40S) and a large (60S) subunit. The 40S small subunit contains 1 molecule of ribosomal RNA (18S rRNA) and 33 different proteins (encoded by 57 genes). The large 60S subunit contains 3 rRNA molecules (25S, 5.8S and 5S rRNA) and 46 different proteins (encoded by 81 genes).

It localises to the cytoplasm. Its function is as follows. Component of the ribosome, a large ribonucleoprotein complex responsible for the synthesis of proteins in the cell. The small ribosomal subunit (SSU) binds messenger RNAs (mRNAs) and translates the encoded message by selecting cognate aminoacyl-transfer RNA (tRNA) molecules. The large subunit (LSU) contains the ribosomal catalytic site termed the peptidyl transferase center (PTC), which catalyzes the formation of peptide bonds, thereby polymerizing the amino acids delivered by tRNAs into a polypeptide chain. The nascent polypeptides leave the ribosome through a tunnel in the LSU and interact with protein factors that function in enzymatic processing, targeting, and the membrane insertion of nascent chains at the exit of the ribosomal tunnel. In Saccharomyces cerevisiae (strain ATCC 204508 / S288c) (Baker's yeast), this protein is Large ribosomal subunit protein eL34B.